We begin with the raw amino-acid sequence, 422 residues long: MDKLSQLPEALLVRILSLLSAKDVVSTMVLSKRWQFLWMLVPKLIYDDSYQAIEYGSFSRFVDRSFTLHDAQVLDTLHFKLGKTSCGTGDIRVWIKTAEKSCLRELIIEIDKSNSDNSSVVLPRSLYTCCRMLVTLKLNNAVLVDATSSFSFPSLKTLSLVSMKFPGDELIKMLLSNCPVLEDLVVKRCPYDNVTTFTVRVSSLKCLVLHETELASINADCGFVIDTPSLECLDIEDGRGGFCVIENNMTKVVKANVCNSYVHTQQLMGSISSVKRLYVCIPSSKDAYPVGSVFHCLVRLTICTCETEWLNLLMCVLRDSPKLRELKLVKNHVYRSHQPRPCWNEPSAVPECLLTSLETLEWVKYEGTEEEKEVAAFILRSGSCLKKVTISSKSTDINKKFEMLKELSLLFRRSPTCQIAFD.

The F-box domain occupies 1–53 (MDKLSQLPEALLVRILSLLSAKDVVSTMVLSKRWQFLWMLVPKLIYDDSYQAI). Residues 342–392 (CWNEPSAVPECLLTSLETLEWVKYEGTEEEKEVAAFILRSGSCLKKVTISS) enclose the FBD domain.

This Arabidopsis thaliana (Mouse-ear cress) protein is Probable FBD-associated F-box protein At1g32375.